Reading from the N-terminus, the 421-residue chain is Probable G-protein coupled receptor 151 (421 aa).

The Extracellular portion of the chain corresponds to 1 to 44 (MGKATLAVFADSDSSNMNESFAHLHFAGGYLPSDSKGWRTIIPS). N18 carries an N-linked (GlcNAc...) asparagine glycan. The chain crosses the membrane as a helical span at residues 45 to 65 (LLAAVCLVGFVGNLCVIGLLL). Topologically, residues 66-74 (HGVWKRKPS) are cytoplasmic. The helical transmembrane segment at 75–95 (MIHSLILNLSLADISLLLFSA) threads the bilayer. Residues 96–122 (PVRATAYVKGVWDLGWFVCKSSDWFTH) lie on the Extracellular side of the membrane. A disulfide bond links C114 and C190. Residues 123–143 (MCMAAKSLTFVVVAKVCFMYA) form a helical membrane-spanning segment. At 144-156 (SDPAKPVGTHNCT) the chain is on the cytoplasmic side. A helical membrane pass occupies residues 157–177 (IWSLLGAIWVVASLLPLPEWF). The Extracellular portion of the chain corresponds to 178–204 (FSTTRHHAGVEMCLVDVPAVAAEFMSL). A helical membrane pass occupies residues 205 to 225 (FGKLYPLLVFCLPLLLAGFYF). Residues 226 to 258 (WRAYNQCKIRCAKTQNLRNQMRSKQLTVMLLST) are Cytoplasmic-facing. The helical transmembrane segment at 259-279 (AVTSALLWLPEWIAWLWVWHL) threads the bilayer. The Extracellular portion of the chain corresponds to 280–289 (KAGGPMPPQG). The chain crosses the membrane as a helical span at residues 290 to 310 (FIALSQVLMFSISTVNPLIFL). Residues 311–421 (MMSEEFKAGL…HEGQETKGCN (111 aa)) lie on the Cytoplasmic side of the membrane. 2 disordered regions span residues 346-381 (IETL…TDKV) and 394-421 (HERD…KGCN). Basic and acidic residues-rich tracts occupy residues 364–379 (DTDR…ETTD) and 409–421 (PWEH…KGCN).

Belongs to the G-protein coupled receptor 1 family. Exclusively expressed in neurons of the habenular complex. The expression is particularly prominent in the medial habenular nucleus, whereas the lateral habenular nucleus exhibited a lower level of expression.

The protein resides in the cell membrane. Orphan receptor. This chain is Probable G-protein coupled receptor 151 (Gpr151), found in Rattus norvegicus (Rat).